Reading from the N-terminus, the 377-residue chain is D-alanine--D-alanine ligase (377 aa).

One can recognise an ATP-grasp domain in the interval 141-347 (KRILNQAGIR…YSELIDRLIQ (207 aa)). 171 to 226 (KEELGDLVFVKPAKQGSSVGIHKVDTEEEYETAMKDAFTYDYKVLVEAGIKNPREI) contributes to the ATP binding site. Residues D301, E314, and N316 each contribute to the Mg(2+) site.

This sequence belongs to the D-alanine--D-alanine ligase family. Mg(2+) is required as a cofactor. Mn(2+) serves as cofactor.

The protein resides in the cytoplasm. The enzyme catalyses 2 D-alanine + ATP = D-alanyl-D-alanine + ADP + phosphate + H(+). It participates in cell wall biogenesis; peptidoglycan biosynthesis. Functionally, cell wall formation. The polypeptide is D-alanine--D-alanine ligase (Limosilactobacillus fermentum (strain NBRC 3956 / LMG 18251) (Lactobacillus fermentum)).